The primary structure comprises 847 residues: Putative membrane protein SCO5905 (847 aa).

Transmembrane regions (helical) follow at residues 18 to 38 (AVVV…APAL), 187 to 207 (GGDK…LLAI), 215 to 235 (LVPL…GAIL), 248 to 268 (ASIM…IITA), 302 to 322 (IVLA…GFGP), 326 to 346 (LGVA…VLLL), 381 to 401 (VKVA…LLGY), 539 to 559 (DTTL…VLLL), 562 to 582 (LLAP…TLGA), 600 to 620 (VTAY…IFIM), 643 to 663 (TGGV…VLMT), and 672 to 692 (FGFA…PLLV). A disordered region spans residues 708 to 729 (RPGTPQTPSTPTSEPPSADAPA). 3 helical membrane-spanning segments follow: residues 744–764 (FTWI…GMYL), 778–798 (FGTL…LVAI), and 808–828 (TIFA…EIWA).

It belongs to the resistance-nodulation-cell division (RND) (TC 2.A.6) family. MmpL subfamily.

Its subcellular location is the cell membrane. The sequence is that of Putative membrane protein SCO5905 from Streptomyces coelicolor (strain ATCC BAA-471 / A3(2) / M145).